The following is a 196-amino-acid chain: ATP-dependent Clp protease proteolytic subunit (196 aa).

Residue Ser98 is the Nucleophile of the active site. His123 is a catalytic residue.

It belongs to the peptidase S14 family. As to quaternary structure, fourteen ClpP subunits assemble into 2 heptameric rings which stack back to back to give a disk-like structure with a central cavity, resembling the structure of eukaryotic proteasomes.

It is found in the cytoplasm. The catalysed reaction is Hydrolysis of proteins to small peptides in the presence of ATP and magnesium. alpha-casein is the usual test substrate. In the absence of ATP, only oligopeptides shorter than five residues are hydrolyzed (such as succinyl-Leu-Tyr-|-NHMec, and Leu-Tyr-Leu-|-Tyr-Trp, in which cleavage of the -Tyr-|-Leu- and -Tyr-|-Trp bonds also occurs).. Its function is as follows. Cleaves peptides in various proteins in a process that requires ATP hydrolysis. Has a chymotrypsin-like activity. Plays a major role in the degradation of misfolded proteins. This is ATP-dependent Clp protease proteolytic subunit from Actinobacillus pleuropneumoniae serotype 5b (strain L20).